The following is a 132-amino-acid chain: Protein C10 (132 aa).

Ala-2 is modified (N-acetylalanine).

Belongs to the UPF0456 family.

The protein localises to the cytoplasm. In terms of biological role, in brain, may be required for corpus callosum development. This chain is Protein C10, found in Bos taurus (Bovine).